A 192-amino-acid polypeptide reads, in one-letter code: Outer-membrane lipoprotein LolB (192 aa).

Positions methionine 1–alanine 17 are cleaved as a signal peptide. Cysteine 18 carries N-palmitoyl cysteine lipidation. Cysteine 18 carries S-diacylglycerol cysteine lipidation.

Belongs to the LolB family. In terms of assembly, monomer.

Its subcellular location is the cell outer membrane. Plays a critical role in the incorporation of lipoproteins in the outer membrane after they are released by the LolA protein. The sequence is that of Outer-membrane lipoprotein LolB from Marinomonas sp. (strain MWYL1).